Here is a 122-residue protein sequence, read N- to C-terminus: Small ribosomal subunit protein uS13 (122 aa).

Residues 97–122 (PVRGQRTHTNARTRKGPAKAIAGKKK) form a disordered region.

This sequence belongs to the universal ribosomal protein uS13 family. As to quaternary structure, part of the 30S ribosomal subunit. Forms a loose heterodimer with protein S19. Forms two bridges to the 50S subunit in the 70S ribosome.

In terms of biological role, located at the top of the head of the 30S subunit, it contacts several helices of the 16S rRNA. In the 70S ribosome it contacts the 23S rRNA (bridge B1a) and protein L5 of the 50S subunit (bridge B1b), connecting the 2 subunits; these bridges are implicated in subunit movement. Contacts the tRNAs in the A and P-sites. In Rhizobium rhizogenes (strain K84 / ATCC BAA-868) (Agrobacterium radiobacter), this protein is Small ribosomal subunit protein uS13.